The primary structure comprises 42 residues: Photosystem I reaction center subunit IX (42 aa).

The helical transmembrane segment at 7 to 27 (YLSTAPVLSALWFAILAGLLI) threads the bilayer.

The protein belongs to the PsaJ family.

The protein localises to the plastid. The protein resides in the chloroplast thylakoid membrane. Functionally, may help in the organization of the PsaE and PsaF subunits. This chain is Photosystem I reaction center subunit IX, found in Chlorokybus atmophyticus (Soil alga).